Here is a 229-residue protein sequence, read N- to C-terminus: Coiled-coil domain-containing protein 134 (229 aa).

A signal peptide spans 1 to 22; it reads MDLLQSLAVFFVLLLPGTEVTG. N148 carries N-linked (GlcNAc...) asparagine glycosylation. The segment at 191–229 is disordered; sequence PSTDPFQKALREEEKRRKKEEKRKEIRKGPRISRSQSEL. The stretch at 196-218 forms a coiled coil; it reads FQKALREEEKRRKKEEKRKEIRK. A Prevents secretion from ER motif is present at residues 226–229; the sequence is QSEL.

This sequence belongs to the CCDC134 family. Interacts with TADA2A. Associates with the PCAF complex via TADA2A binding. Post-translationally, O-glycosylated, with additional sialic acid modifications.

Its subcellular location is the endoplasmic reticulum lumen. It is found in the secreted. The protein localises to the cytoplasm. The protein resides in the nucleus. In terms of biological role, molecular adapter required to prevent protein hyperglycosylation of HSP90B1: during translation, associates with nascent HSP90B1 and the STT3A catalytic component of the OST-A complex and tethers them to a specialized translocon that forms a microenvironment for HSP90B1 folding. In the CCDC134-containing translocon, STT3A associates with the SRT pseudosubstrate motif of HSP90B1, preventing access to facultative glycosylation sites until folding is completed, preventing hyperglycosylation and subsequent degradation of HSP90B1. In extracellular secreted form, promotes proliferation and activation of CD8(+) T-cells, suggesting a cytokine-like function. May inhibit ERK and JNK signaling activity. May suppress cell migration and invasion activity, via its effects on ERK and JNK signaling. May also localize in the nucleus: enhances stability of the PCAF histone acetyltransferase (HAT) complex member TADA2A and thus promotes PCAF-mediated histone acetyltransferase activity. Has a critical role in the regulation of osteogenesis and bone development. The sequence is that of Coiled-coil domain-containing protein 134 (Ccdc134) from Rattus norvegicus (Rat).